A 140-amino-acid polypeptide reads, in one-letter code: Large ribosomal subunit protein uL11 (140 aa).

This sequence belongs to the universal ribosomal protein uL11 family. As to quaternary structure, part of the ribosomal stalk of the 50S ribosomal subunit. Interacts with L10 and the large rRNA to form the base of the stalk. L10 forms an elongated spine to which L12 dimers bind in a sequential fashion forming a multimeric L10(L12)X complex. In terms of processing, one or more lysine residues are methylated.

Forms part of the ribosomal stalk which helps the ribosome interact with GTP-bound translation factors. In Staphylococcus aureus (strain bovine RF122 / ET3-1), this protein is Large ribosomal subunit protein uL11.